The following is a 180-amino-acid chain: Large ribosomal subunit protein uL5 (180 aa).

It belongs to the universal ribosomal protein uL5 family. In terms of assembly, part of the 50S ribosomal subunit; part of the 5S rRNA/L5/L18/L25 subcomplex. Contacts the 5S rRNA and the P site tRNA. Forms a bridge to the 30S subunit in the 70S ribosome.

Functionally, this is one of the proteins that bind and probably mediate the attachment of the 5S RNA into the large ribosomal subunit, where it forms part of the central protuberance. In the 70S ribosome it contacts protein S13 of the 30S subunit (bridge B1b), connecting the 2 subunits; this bridge is implicated in subunit movement. Contacts the P site tRNA; the 5S rRNA and some of its associated proteins might help stabilize positioning of ribosome-bound tRNAs. This is Large ribosomal subunit protein uL5 from Streptococcus agalactiae serotype Ia (strain ATCC 27591 / A909 / CDC SS700).